We begin with the raw amino-acid sequence, 155 residues long: DNA gyrase inhibitor (155 aa).

This sequence belongs to the DNA gyrase inhibitor family. Interacts with DNA gyrase.

Its subcellular location is the cytoplasm. Its function is as follows. Inhibits the supercoiling activity of DNA gyrase. Acts by inhibiting DNA gyrase at an early step, prior to (or at the step of) binding of DNA by the gyrase. It protects cells against toxins that target DNA gyrase, by inhibiting activity of these toxins and reducing the formation of lethal double-strand breaks in the cell. This is DNA gyrase inhibitor from Escherichia fergusonii (strain ATCC 35469 / DSM 13698 / CCUG 18766 / IAM 14443 / JCM 21226 / LMG 7866 / NBRC 102419 / NCTC 12128 / CDC 0568-73).